Consider the following 879-residue polypeptide: Phosphoenolpyruvate carboxylase (879 aa).

Catalysis depends on residues histidine 138 and lysine 545.

It belongs to the PEPCase type 1 family. The cofactor is Mg(2+).

It catalyses the reaction oxaloacetate + phosphate = phosphoenolpyruvate + hydrogencarbonate. Functionally, forms oxaloacetate, a four-carbon dicarboxylic acid source for the tricarboxylic acid cycle. The sequence is that of Phosphoenolpyruvate carboxylase from Actinobacillus pleuropneumoniae serotype 5b (strain L20).